A 379-amino-acid polypeptide reads, in one-letter code: Cytochrome b (379 aa).

The next 4 membrane-spanning stretches (helical) occupy residues 33–53, 77–98, 113–133, and 178–198; these read FGSL…FLAM, WLIR…FIHV, WNIG…GYVL, and FFAF…VHLL. Heme b-binding residues include His83 and His97. The heme b site is built by His182 and His196. His201 is a binding site for a ubiquinone. Transmembrane regions (helical) follow at residues 226 to 246, 288 to 308, 320 to 340, and 347 to 367; these read TKDL…ALFF, LGGV…PLLN, VTQI…WIGG, and FTTI…ILIP.

Belongs to the cytochrome b family. As to quaternary structure, the cytochrome bc1 complex contains 11 subunits: 3 respiratory subunits (MT-CYB, CYC1 and UQCRFS1), 2 core proteins (UQCRC1 and UQCRC2) and 6 low-molecular weight proteins (UQCRH/QCR6, UQCRB/QCR7, UQCRQ/QCR8, UQCR10/QCR9, UQCR11/QCR10 and a cleavage product of UQCRFS1). This cytochrome bc1 complex then forms a dimer. It depends on heme b as a cofactor.

The protein localises to the mitochondrion inner membrane. In terms of biological role, component of the ubiquinol-cytochrome c reductase complex (complex III or cytochrome b-c1 complex) that is part of the mitochondrial respiratory chain. The b-c1 complex mediates electron transfer from ubiquinol to cytochrome c. Contributes to the generation of a proton gradient across the mitochondrial membrane that is then used for ATP synthesis. The protein is Cytochrome b (MT-CYB) of Akodon reigi (Reig's grass mouse).